A 558-amino-acid chain; its full sequence is Proline--tRNA ligase (558 aa).

It belongs to the class-II aminoacyl-tRNA synthetase family. ProS type 1 subfamily. Homodimer.

It is found in the cytoplasm. It carries out the reaction tRNA(Pro) + L-proline + ATP = L-prolyl-tRNA(Pro) + AMP + diphosphate. In terms of biological role, catalyzes the attachment of proline to tRNA(Pro) in a two-step reaction: proline is first activated by ATP to form Pro-AMP and then transferred to the acceptor end of tRNA(Pro). As ProRS can inadvertently accommodate and process non-cognate amino acids such as alanine and cysteine, to avoid such errors it has two additional distinct editing activities against alanine. One activity is designated as 'pretransfer' editing and involves the tRNA(Pro)-independent hydrolysis of activated Ala-AMP. The other activity is designated 'posttransfer' editing and involves deacylation of mischarged Ala-tRNA(Pro). The misacylated Cys-tRNA(Pro) is not edited by ProRS. This is Proline--tRNA ligase from Coprothermobacter proteolyticus (strain ATCC 35245 / DSM 5265 / OCM 4 / BT).